A 499-amino-acid chain; its full sequence is Probable cytosol aminopeptidase (499 aa).

2 residues coordinate Mn(2+): Lys-263 and Asp-268. Lys-275 is a catalytic residue. 3 residues coordinate Mn(2+): Asp-286, Asp-345, and Glu-347. Residue Arg-349 is part of the active site.

Belongs to the peptidase M17 family. Requires Mn(2+) as cofactor.

Its subcellular location is the cytoplasm. It carries out the reaction Release of an N-terminal amino acid, Xaa-|-Yaa-, in which Xaa is preferably Leu, but may be other amino acids including Pro although not Arg or Lys, and Yaa may be Pro. Amino acid amides and methyl esters are also readily hydrolyzed, but rates on arylamides are exceedingly low.. The catalysed reaction is Release of an N-terminal amino acid, preferentially leucine, but not glutamic or aspartic acids.. Its function is as follows. Presumably involved in the processing and regular turnover of intracellular proteins. Catalyzes the removal of unsubstituted N-terminal amino acids from various peptides. The sequence is that of Probable cytosol aminopeptidase (pepA) from Chlamydia muridarum (strain MoPn / Nigg).